The chain runs to 179 residues: Large ribosomal subunit protein uL5 (179 aa).

It belongs to the universal ribosomal protein uL5 family. As to quaternary structure, part of the 50S ribosomal subunit; part of the 5S rRNA/L5/L18/L25 subcomplex. Contacts the 5S rRNA and the P site tRNA. Forms a bridge to the 30S subunit in the 70S ribosome.

Its function is as follows. This is one of the proteins that bind and probably mediate the attachment of the 5S RNA into the large ribosomal subunit, where it forms part of the central protuberance. In the 70S ribosome it contacts protein S13 of the 30S subunit (bridge B1b), connecting the 2 subunits; this bridge is implicated in subunit movement. Contacts the P site tRNA; the 5S rRNA and some of its associated proteins might help stabilize positioning of ribosome-bound tRNAs. This Rhodospirillum rubrum (strain ATCC 11170 / ATH 1.1.1 / DSM 467 / LMG 4362 / NCIMB 8255 / S1) protein is Large ribosomal subunit protein uL5.